The following is a 225-amino-acid chain: Thymidine kinase (225 aa).

8-15 is an ATP binding site; that stretch reads GPMFSGKT. E92 acts as the Proton acceptor in catalysis. Y122 contacts substrate. Residues C147 and C150 each contribute to the Zn(2+) site. 167-171 contributes to the substrate binding site; sequence KILVG. Zn(2+) is bound by residues C180 and C183. Over residues 197–207 the composition is skewed to polar residues; it reads SEQINNQTELS. The interval 197–225 is disordered; the sequence is SEQINNQTELSEPTRQKESLKIKKRRIDS. Residues 208 to 225 show a composition bias toward basic and acidic residues; it reads EPTRQKESLKIKKRRIDS.

This sequence belongs to the thymidine kinase family.

It catalyses the reaction thymidine + ATP = dTMP + ADP + H(+). In Acanthamoeba polyphaga mimivirus (APMV), this protein is Thymidine kinase (TK).